The primary structure comprises 3411 residues: Genome polyprotein (3411 aa).

The Cytoplasmic portion of the chain corresponds to 1-104 (MSGRKAQGKT…LSSRKRRSHD (104 aa)). The tract at residues 38–72 (PGPSRGVQGFIFFFLFNILTGKKITAHLKRLWKML) is hydrophobic; homodimerization of capsid protein C. The propeptide at 102 to 121 (SHDVLTVQFLILGMLLMTGG) is ER anchor for the capsid protein C, removed in mature form by serine protease NS3. The chain crosses the membrane as a helical span at residues 105–125 (VLTVQFLILGMLLMTGGVTLV). The Extracellular segment spans residues 126-244 (RKNRWLLLNV…GERQLQKIER (119 aa)). 2 N-linked (GlcNAc...) asparagine; by host glycosylation sites follow: Asn-134 and Asn-150. The chain crosses the membrane as a helical span at residues 245–265 (WLVRNPFFAVTALTIAYLVGS). The Cytoplasmic portion of the chain corresponds to 266 to 270 (NMTQR). The helical transmembrane segment at 271-285 (VVIALLVLAVGPAYS) threads the bilayer. Residues 286–730 (AHCIGITDRD…TVFGSAFQGL (445 aa)) lie on the Extracellular side of the membrane. 8 cysteine pairs are disulfide-bonded: Cys-288–Cys-315, Cys-345–Cys-401, Cys-345–Cys-406, Cys-359–Cys-390, Cys-377–Cys-401, Cys-377–Cys-406, Cys-467–Cys-568, and Cys-585–Cys-615. Residues 383-396 (DRGWGNGCGLFGKG) are fusion peptide. A helical transmembrane segment spans residues 731 to 751 (FGGLNWITKVIMGAVLIWVGI). The Extracellular portion of the chain corresponds to 752–757 (NTRNMT). Residues 758 to 778 (MSMSMILVGVIMMFLSLGVGA) traverse the membrane as a helical segment. Residues 779–1132 (DQGCAINFGK…LVRSWVTAGE (354 aa)) are Extracellular-facing. Disulfide bonds link Cys-782–Cys-793, Cys-833–Cys-921, Cys-957–Cys-1002, Cys-1058–Cys-1107, Cys-1069–Cys-1091, and Cys-1090–Cys-1094. N-linked (GlcNAc...) asparagine; by host glycosylation is found at Asn-908 and Asn-986. Residues 1133 to 1153 (IHAVPFGLVSMMIAMEVVLRK) traverse the membrane as a helical segment. At 1154 to 1201 (RQGPKQMLVGGVVLLGAMLVGQVTLLDLLKLTVAVGLHFHEMNNGGDA) the chain is on the cytoplasmic side. A helical transmembrane segment spans residues 1202–1222 (MYMALIAAFSIRPGLLIGFGL). Residues 1223-1287 (RTLWSPRERL…ILPLMALLTP (65 aa)) lie on the Lumenal side of the membrane. Residues 1288-1308 (VTMAEVRLATMLFCTVVIIGV) traverse the membrane as a helical segment. Topologically, residues 1309–1355 (LHQNSKDTSMQKTIPLVALTLTSYLGLTQPFLGLCAFLATRIFGRRS) are cytoplasmic. A helical membrane pass occupies residues 1356-1376 (IPVNEALAAAGLVGVLAGLAF). Topologically, residues 1377–1378 (QE) are lumenal. A helical membrane pass occupies residues 1379-1399 (MENFLGPIAVGGILMMLVSVA). Residues 1400–1456 (GRVDGLELKKLGEVSWEEEAEISGSSARYDVALSEQGEFKLLSEEKVPWDQVVMTSL) are Cytoplasmic-facing. The segment at 1407-1446 (LKKLGEVSWEEEAEISGSSARYDVALSEQGEFKLLSEEKV) is interacts with and activates NS3 protease. The segment at residues 1457–1477 (ALVGAAIHPFALLLVLAGWLF) is an intramembrane region (helical). The Cytoplasmic portion of the chain corresponds to 1478-2157 (HVRGARRSGD…RNALSMMPEA (680 aa)). The Peptidase S7 domain maps to 1485 to 1665 (SGDVLWDIPT…EVKEEGKEEL (181 aa)). Catalysis depends on charge relay system; for serine protease NS3 activity residues His-1537, Asp-1561, and Ser-1622. The Helicase ATP-binding domain maps to 1669 to 1825 (PTMLKKGMTT…HSNGEIEDVQ (157 aa)). An important for RNA-binding region spans residues 1673–1676 (KKGM). 1682-1689 (FHPGAGKT) provides a ligand contact to ATP. The DEAH box signature appears at 1773 to 1776 (DEAH). The Helicase C-terminal domain maps to 1820 to 1997 (EIEDVQTDIP…VRGGMVAPLY (178 aa)). Lys-1877 carries the post-translational modification N6-acetyllysine; by host. The interval 1942–1961 (AAQRRGRIGRNPNRDGDSYY) is disordered. Residues 2158–2178 (MTIVMLFILAGLLTSGMVIFF) form a helical membrane-spanning segment. Residues 2179 to 2186 (MSPKGISR) are Lumenal-facing. An intramembrane region (helical) is located at residues 2187-2207 (MSMAMGTMAGCGYLMFLGGVK). Residues 2208 to 2209 (PT) are Lumenal-facing. The helical transmembrane segment at 2210 to 2230 (HISYIMLIFFVLMVVVIPEPG) threads the bilayer. The Cytoplasmic segment spans residues 2231 to 2241 (QQRSIQDNQVA). The helical transmembrane segment at 2242–2262 (YLIIGILTLVSVVAANELGML) threads the bilayer. Residues 2263–2293 (EKTKEDLFGKKNLIPSSASPWSWPDLDLKPG) lie on the Lumenal side of the membrane. Residues 2294–2314 (AAWTVYVGIVTMLSPMLHHWI) constitute an intramembrane region (helical). Residues 2315–2360 (KVEYGNLSLSGIAQSASVLSFMDKGIPFMKMNISVIILLVSGWNSI) are Lumenal-facing. The chain crosses the membrane as a helical span at residues 2361–2380 (TVMPLLCGIGCAMLHWSLIL). At 2381 to 2421 (PGIKAQQSKLAQRRVFHGVAKNPVVDGNPTVDIEEAPEMPA) the chain is on the cytoplasmic side. A helical membrane pass occupies residues 2422–2442 (LYEKKLALYLLLALSLASVAM). Over 2443–2445 (CRT) the chain is Lumenal. A helical transmembrane segment spans residues 2446 to 2466 (PFSLAEGIVLASAALGPLIEG). The Cytoplasmic segment spans residues 2467 to 3411 (NTSLLWNGPM…DADLQPGELI (945 aa)). The 265-residue stretch at 2507 to 2771 (GSANGKTLGE…DVILPIGTRS (265 aa)) folds into the mRNA cap 0-1 NS5-type MT domain. Ser-2562 serves as a coordination point for S-adenosyl-L-methionine. Ser-2562 bears the Phosphoserine mark. Lys-2567 (for 2'-O-MTase activity) is an active-site residue. Gly-2592, Trp-2593, Thr-2610, Leu-2611, Asp-2637, and Ile-2638 together coordinate S-adenosyl-L-methionine. Asp-2652 acts as the For 2'-O-MTase activity in catalysis. An S-adenosyl-L-methionine-binding site is contributed by Ile-2653. Active-site for 2'-O-MTase activity residues include Lys-2688 and Glu-2724. Tyr-2726 contributes to the S-adenosyl-L-methionine binding site. The Nuclear localization signal signature appears at 2878-2911 (RKIMKVVNRWLFRHLAREKNPRLCTKEEFIAKVR). Zn(2+) is bound by residues Glu-2945, His-2949, Cys-2954, and Cys-2957. The region spanning 3035 to 3187 (GGFYADDTAG…RPIDDRFGLA (153 aa)) is the RdRp catalytic domain. Positions 3222, 3238, and 3357 each coordinate Zn(2+).

This sequence in the N-terminal section; belongs to the class I-like SAM-binding methyltransferase superfamily. mRNA cap 0-1 NS5-type methyltransferase family. As to quaternary structure, homodimer. Interacts (via N-terminus) with host EXOC1 (via C-terminus); this interaction results in EXOC1 degradation through the proteasome degradation pathway. In terms of assembly, forms heterodimers with envelope protein E in the endoplasmic reticulum and Golgi. Homodimer; in the endoplasmic reticulum and Golgi. Interacts with protein prM. Interacts with non-structural protein 1. As to quaternary structure, homodimer; Homohexamer when secreted. Interacts with envelope protein E. NS1 interacts with NS4B. Interacts with host complement protein CFH; this interaction leads to the degradation of C3. In terms of assembly, interacts (via N-terminus) with serine protease NS3. Forms a heterodimer with serine protease NS3. May form homooligomers. As to quaternary structure, forms a heterodimer with NS2B. Interacts with non-structural protein 2A (via N-terminus). Interacts with NS4B. Interacts with unphosphorylated RNA-directed RNA polymerase NS5; this interaction stimulates RNA-directed RNA polymerase NS5 guanylyltransferase activity. NS3 interacts with host PDCD6IP; this interaction contributes to virion release. In terms of assembly, interacts with serine protease NS3. Homodimer. Interacts with host STAT2; this interaction prevents the establishment of cellular antiviral state. Interacts with serine protease NS3. Interacts with host TRIM23; this interaction leads to NS5 ubiquitination. In terms of processing, specific enzymatic cleavages in vivo yield mature proteins. The nascent capsid protein C contains a C-terminal hydrophobic domain that act as a signal sequence for translocation of prM into the lumen of the ER. Mature capsid protein C is cleaved at a site upstream of this hydrophobic domain by NS3. prM is cleaved in post-Golgi vesicles by a host furin, releasing the mature small envelope protein M, and peptide pr. Non-structural protein 2A-alpha, a C-terminally truncated form of non-structural protein 2A, results from partial cleavage by NS3. Specific enzymatic cleavages in vivo yield mature proteins peptide 2K acts as a signal sequence and is removed from the N-terminus of NS4B by the host signal peptidase in the ER lumen. Signal cleavage at the 2K-4B site requires a prior NS3 protease-mediated cleavage at the 4A-2K site. Post-translationally, cleaved in post-Golgi vesicles by a host furin, releasing the mature small envelope protein M, and peptide pr. This cleavage is incomplete as up to 30% of viral particles still carry uncleaved prM. N-glycosylated. In terms of processing, N-glycosylated. The excreted form is glycosylated and this is required for efficient secretion of the protein from infected cells. Post-translationally, polyubiquitinated; ubiquitination is probably mediated by host TRIM23 and is prerequisite for NS5-STAT2 interaction. NS5 is not ISGylated or sumoylated. Acetylated by host KAT5. Acetylation modulates NS3 RNA-binding and unwinding activities and plays an important positive role for viral replication. In terms of processing, phosphorylated on serines residues. This phosphorylation may trigger NS5 nuclear localization.

The protein localises to the virion. It is found in the host nucleus. Its subcellular location is the host cytoplasm. The protein resides in the host perinuclear region. It localises to the secreted. The protein localises to the virion membrane. It is found in the host endoplasmic reticulum membrane. It catalyses the reaction Selective hydrolysis of -Xaa-Xaa-|-Yaa- bonds in which each of the Xaa can be either Arg or Lys and Yaa can be either Ser or Ala.. It carries out the reaction RNA(n) + a ribonucleoside 5'-triphosphate = RNA(n+1) + diphosphate. The catalysed reaction is a ribonucleoside 5'-triphosphate + H2O = a ribonucleoside 5'-diphosphate + phosphate + H(+). The enzyme catalyses ATP + H2O = ADP + phosphate + H(+). It catalyses the reaction a 5'-end (5'-triphosphoguanosine)-ribonucleoside in mRNA + S-adenosyl-L-methionine = a 5'-end (N(7)-methyl 5'-triphosphoguanosine)-ribonucleoside in mRNA + S-adenosyl-L-homocysteine. It carries out the reaction a 5'-end (N(7)-methyl 5'-triphosphoguanosine)-ribonucleoside in mRNA + S-adenosyl-L-methionine = a 5'-end (N(7)-methyl 5'-triphosphoguanosine)-(2'-O-methyl-ribonucleoside) in mRNA + S-adenosyl-L-homocysteine + H(+). Functionally, plays a role in virus budding by binding to the cell membrane and gathering the viral RNA into a nucleocapsid that forms the core of a mature virus particle. During virus entry, may induce genome penetration into the host cytoplasm after hemifusion induced by the surface proteins. Can migrate to the cell nucleus where it modulates host functions. Inhibits RNA silencing by interfering with host Dicer. Its function is as follows. Prevents premature fusion activity of envelope proteins in trans-Golgi by binding to envelope protein E at pH6.0. After virion release in extracellular space, gets dissociated from E dimers. In terms of biological role, acts as a chaperone for envelope protein E during intracellular virion assembly by masking and inactivating envelope protein E fusion peptide. prM is the only viral peptide matured by host furin in the trans-Golgi network probably to avoid catastrophic activation of the viral fusion activity in acidic Golgi compartment prior to virion release. prM-E cleavage is inefficient, and many virions are only partially matured. These uncleaved prM would play a role in immune evasion. Functionally, may play a role in virus budding. Exerts cytotoxic effects by activating a mitochondrial apoptotic pathway through M ectodomain. May display a viroporin activity. Binds to host cell surface receptor and mediates fusion between viral and cellular membranes. Envelope protein is synthesized in the endoplasmic reticulum in the form of heterodimer with protein prM. They play a role in virion budding in the ER, and the newly formed immature particle is covered with 60 spikes composed of heterodimer between precursor prM and envelope protein E. The virion is transported to the Golgi apparatus where the low pH causes dissociation of PrM-E heterodimers and formation of E homodimers. prM-E cleavage is inefficient, and many virions are only partially matured. These uncleaved prM would play a role in immune evasion. Its function is as follows. Involved in immune evasion, pathogenesis and viral replication. Once cleaved off the polyprotein, is targeted to three destinations: the viral replication cycle, the plasma membrane and the extracellular compartment. Essential for viral replication. Required for formation of the replication complex and recruitment of other non-structural proteins to the ER-derived membrane structures. Excreted as a hexameric lipoparticle that plays a role against host immune response. Antagonizing the complement function. Binds to the host macrophages and dendritic cells. Inhibits signal transduction originating from Toll-like receptor 3 (TLR3). In terms of biological role, component of the viral RNA replication complex that functions in virion assembly and antagonizes the host immune response. Functionally, required cofactor for the serine protease function of NS3. May have membrane-destabilizing activity and form viroporins. Displays three enzymatic activities: serine protease, NTPase and RNA helicase. NS3 serine protease, in association with NS2B, performs its autocleavage and cleaves the polyprotein at dibasic sites in the cytoplasm: C-prM, NS2A-NS2B, NS2B-NS3, NS3-NS4A, NS4A-2K and NS4B-NS5. NS3 RNA helicase binds RNA and unwinds dsRNA in the 3' to 5' direction. Also plays a role in virus assembly. Its function is as follows. Regulates the ATPase activity of the NS3 helicase activity. NS4A allows NS3 helicase to conserve energy during unwinding. In terms of biological role, functions as a signal peptide for NS4B and is required for the interferon antagonism activity of the latter. Functionally, induces the formation of ER-derived membrane vesicles where the viral replication takes place. Inhibits interferon (IFN)-induced host STAT1 phosphorylation and nuclear translocation, thereby preventing the establishment of cellular antiviral state by blocking the IFN-alpha/beta pathway. Replicates the viral (+) and (-) RNA genome, and performs the capping of genomes in the cytoplasm. NS5 methylates viral RNA cap at guanine N-7 and ribose 2'-O positions. Besides its role in RNA genome replication, also prevents the establishment of cellular antiviral state by blocking the interferon-alpha/beta (IFN-alpha/beta) signaling pathway. IFN-I induces binding of NS5 to host IFN-activated transcription factor STAT2, preventing its transcriptional activity. Host TRIM23 is the E3 ligase that interacts with and polyubiquitinates NS5 to promote its binding to STAT2 and trigger IFN-I signaling inhibition. This Yellow fever virus (strain Ghana/Asibi/1927) (YFV) protein is Genome polyprotein.